The sequence spans 124 residues: uncharacterized protein (124 aa).

Residues 42 to 118 enclose the GIY-YIG domain; it reads DKGGIFMFYN…INTQHSKYNI (77 aa).

This is an uncharacterized protein from Bacillus subtilis (strain 168).